Consider the following 196-residue polypeptide: Leucyl/phenylalanyl-tRNA--protein transferase (196 aa).

Belongs to the L/F-transferase family.

The protein resides in the cytoplasm. It carries out the reaction N-terminal L-lysyl-[protein] + L-leucyl-tRNA(Leu) = N-terminal L-leucyl-L-lysyl-[protein] + tRNA(Leu) + H(+). The catalysed reaction is N-terminal L-arginyl-[protein] + L-leucyl-tRNA(Leu) = N-terminal L-leucyl-L-arginyl-[protein] + tRNA(Leu) + H(+). The enzyme catalyses L-phenylalanyl-tRNA(Phe) + an N-terminal L-alpha-aminoacyl-[protein] = an N-terminal L-phenylalanyl-L-alpha-aminoacyl-[protein] + tRNA(Phe). Functionally, functions in the N-end rule pathway of protein degradation where it conjugates Leu, Phe and, less efficiently, Met from aminoacyl-tRNAs to the N-termini of proteins containing an N-terminal arginine or lysine. In Thermosynechococcus vestitus (strain NIES-2133 / IAM M-273 / BP-1), this protein is Leucyl/phenylalanyl-tRNA--protein transferase.